A 1680-amino-acid chain; its full sequence is GRIP and coiled-coil domain-containing protein 2 (1680 aa).

Met1 is subject to N-acetylmethionine. Positions 1 to 14 are enriched in low complexity; the sequence is MEDSAPDAVAAAPS. 2 disordered regions span residues 1 to 23 and 1468 to 1522; these read MEDSAPDAVAAAPSGTPKSKLET and KSEP…SSAG. Positions 31–1614 form a coiled coil; sequence KFAKKQMMLL…REKSVANLEY (1584 aa). Positions 1469–1484 are enriched in polar residues; it reads SEPSTRSPASSHQPSK. A phosphoserine mark is found at Ser1475 and Ser1479. Residues 1570 to 1609 form a mediates interaction with RAB6A region; that stretch reads HLNGLLRETEATNAILMEQIKLLKSEIRRLERNQEREKSV. Residues 1570 to 1680 are mediates interaction with RAB9A; sequence HLNGLLRETE…SYLHSWSGLR (111 aa). Residues 1605–1655 enclose the GRIP domain; the sequence is REKSVANLEYLKNVLLRFIFLKPGSERERLLPVIDTMLQLSPEEKGKLATV.

Homodimer. Interacts (via GRIP domain) with RAB6A (preferentially in its GTP-bound form). May interact (RAB6A-dependent) with ARL1; might be involved in GCC2 Golgi localization. Interacts (probably via GRIP domain) with RAB9A (preferentially in its GTP-bound form). Interacts with CLASP1 and CLASP2; recruits both proteins to membranes of the TGN. Interacts with STX16.

Its subcellular location is the cytoplasm. It is found in the golgi apparatus. The protein resides in the trans-Golgi network membrane. In terms of biological role, golgin which probably tethers transport vesicles to the trans-Golgi network (TGN) and regulates vesicular transport between the endosomes and the Golgi. As a RAB9A effector it is involved in recycling of the mannose 6-phosphate receptor from the late endosomes to the TGN. May also play a role in transport between the recycling endosomes and the Golgi. Required for maintenance of the Golgi structure, it is involved in the biogenesis of noncentrosomal, Golgi-associated microtubules through recruitment of CLASP1 and CLASP2. This Mus musculus (Mouse) protein is GRIP and coiled-coil domain-containing protein 2 (Gcc2).